The primary structure comprises 76 residues: Large ribosomal subunit protein bL31 (76 aa).

Cys16, Cys18, Cys36, and Cys39 together coordinate Zn(2+).

It belongs to the bacterial ribosomal protein bL31 family. Type A subfamily. As to quaternary structure, part of the 50S ribosomal subunit. The cofactor is Zn(2+).

Functionally, binds the 23S rRNA. The protein is Large ribosomal subunit protein bL31 of Syntrophobacter fumaroxidans (strain DSM 10017 / MPOB).